A 395-amino-acid polypeptide reads, in one-letter code: MRYFLLFLTLLFLSPSVTASAINCDPNTTTSHQLLFGFGSPIVQSVLFDGCMLDIEKDDYGFVWSCLSNENGDYCKGLYKPRFSQGVSPNWPMCDLSGASAERCIYPYCPEGEECVPLPPSPPSDSPVDGLSSSFKSAFNQVYKNQSEMASTLNHVSGQVSHSQDMVQLNTKFHADRVLESVTAVNNRLGGQMEYLEEIRIDVWDTQREVRKAKDELYSRVAAVSYDVLYSELNVLRAIDELKDSLGGTVVPPNPDQPNPTPPDSSSPNYTGALNTISKKLNTLETISQQLDTMNTALSGRCSNPERCQFPIREAETELETAQQNLKQMINEKITQSALHQFKGSAAVPSFCSYVEAFGYNLCFDFSLFSENLHIIRMIVLAMAYILAAMLILFR.

The tract at residues 247 to 270 (GGTVVPPNPDQPNPTPPDSSSPNY) is disordered. Positions 252 to 265 (PPNPDQPNPTPPDS) are enriched in pro residues.

This is an uncharacterized protein from Vibrio cholerae serotype O1 (strain ATCC 39315 / El Tor Inaba N16961).